A 370-amino-acid polypeptide reads, in one-letter code: Phosphate acyltransferase (370 aa).

This sequence belongs to the PlsX family. Homodimer. Probably interacts with PlsY.

The protein resides in the cytoplasm. It carries out the reaction a fatty acyl-[ACP] + phosphate = an acyl phosphate + holo-[ACP]. Its pathway is lipid metabolism; phospholipid metabolism. Catalyzes the reversible formation of acyl-phosphate (acyl-PO(4)) from acyl-[acyl-carrier-protein] (acyl-ACP). This enzyme utilizes acyl-ACP as fatty acyl donor, but not acyl-CoA. In Paracoccus denitrificans (strain Pd 1222), this protein is Phosphate acyltransferase.